The primary structure comprises 99 residues: Aspartyl/glutamyl-tRNA(Asn/Gln) amidotransferase subunit C (99 aa).

Belongs to the GatC family. As to quaternary structure, heterotrimer of A, B and C subunits.

The enzyme catalyses L-glutamyl-tRNA(Gln) + L-glutamine + ATP + H2O = L-glutaminyl-tRNA(Gln) + L-glutamate + ADP + phosphate + H(+). The catalysed reaction is L-aspartyl-tRNA(Asn) + L-glutamine + ATP + H2O = L-asparaginyl-tRNA(Asn) + L-glutamate + ADP + phosphate + 2 H(+). Functionally, allows the formation of correctly charged Asn-tRNA(Asn) or Gln-tRNA(Gln) through the transamidation of misacylated Asp-tRNA(Asn) or Glu-tRNA(Gln) in organisms which lack either or both of asparaginyl-tRNA or glutaminyl-tRNA synthetases. The reaction takes place in the presence of glutamine and ATP through an activated phospho-Asp-tRNA(Asn) or phospho-Glu-tRNA(Gln). The sequence is that of Aspartyl/glutamyl-tRNA(Asn/Gln) amidotransferase subunit C from Bifidobacterium longum (strain NCC 2705).